A 391-amino-acid polypeptide reads, in one-letter code: MAVKVLVVDDSSFFRRRVSEILELDSEIEVIGFAVNGRDAVEKAASLRPDMITMDVEMPVLDGISAVKEIMASNPTPILMFSSLTRSGATATLDALDAGAMDFLPKKFEDIARNNEDAIKLLQSKVKEIGRQRIRRVASPRPSSINKPLFTPTSAPSALAARFAQTNKTATTVVQPERSFNNSPVTSRSAIVTKRASGKHYQLVAIGTSTGGPVALQTILTQLPANFPHPILLIQHMPAAFTPAFAARLNSLCKIQVKEAQQGDRLQAGVAYLAPGGQQMMIDGRGASRTLRVFEDNSERISYKPSVDVTFASAAKAYQGDVLAIVLTGMGADGREGARMLKQSGATIWAQDEKSCVVYGMPQAIANAGLASESLPLDEVAIRLKTEVGCG.

One can recognise a Response regulatory domain in the interval 4–121; sequence KVLVVDDSSF…ARNNEDAIKL (118 aa). The residue at position 55 (aspartate 55) is a 4-aspartylphosphate. Residues 197–391 enclose the CheB-type methylesterase domain; the sequence is SGKHYQLVAI…IRLKTEVGCG (195 aa). Active-site residues include serine 209, histidine 236, and aspartate 333.

The protein belongs to the CheB family. Phosphorylated by CheA. Phosphorylation of the N-terminal regulatory domain activates the methylesterase activity.

The protein resides in the cytoplasm. It carries out the reaction [protein]-L-glutamate 5-O-methyl ester + H2O = L-glutamyl-[protein] + methanol + H(+). The enzyme catalyses L-glutaminyl-[protein] + H2O = L-glutamyl-[protein] + NH4(+). Involved in chemotaxis. Part of a chemotaxis signal transduction system that modulates chemotaxis in response to various stimuli. Catalyzes the demethylation of specific methylglutamate residues introduced into the chemoreceptors (methyl-accepting chemotaxis proteins or MCP) by CheR. Also mediates the irreversible deamidation of specific glutamine residues to glutamic acid. This chain is Protein-glutamate methylesterase/protein-glutamine glutaminase, found in Pseudoalteromonas translucida (strain TAC 125).